The primary structure comprises 312 residues: DNA-directed RNA polymerase subunit alpha (312 aa).

The segment at 1–226 (MIEFKKPNIT…EHFKAFESAD (226 aa)) is alpha N-terminal domain (alpha-NTD). Residues 243–312 (KEKKLEMTIE…DLGLSLRQED (70 aa)) form an alpha C-terminal domain (alpha-CTD) region.

Belongs to the RNA polymerase alpha chain family. Homodimer. The RNAP catalytic core consists of 2 alpha, 1 beta, 1 beta' and 1 omega subunit. When a sigma factor is associated with the core the holoenzyme is formed, which can initiate transcription.

It carries out the reaction RNA(n) + a ribonucleoside 5'-triphosphate = RNA(n+1) + diphosphate. Its function is as follows. DNA-dependent RNA polymerase catalyzes the transcription of DNA into RNA using the four ribonucleoside triphosphates as substrates. This chain is DNA-directed RNA polymerase subunit alpha, found in Lactobacillus delbrueckii subsp. bulgaricus (strain ATCC BAA-365 / Lb-18).